The following is a 323-amino-acid chain: Tyrosine recombinase XerD (323 aa).

The 86-residue stretch at 21 to 106 folds into the Core-binding (CB) domain; the sequence is AEDDQAIQRF…TLRGFYALCL (86 aa). The region spanning 127-317 is the Tyr recombinase domain; the sequence is SLPKALTESQ…ARQHLQTLHA (191 aa). Active-site residues include arginine 167, lysine 191, histidine 269, arginine 272, and histidine 295. Tyrosine 304 acts as the O-(3'-phospho-DNA)-tyrosine intermediate in catalysis.

The protein belongs to the 'phage' integrase family. XerD subfamily. As to quaternary structure, forms a cyclic heterotetrameric complex composed of two molecules of XerC and two molecules of XerD.

It localises to the cytoplasm. Site-specific tyrosine recombinase, which acts by catalyzing the cutting and rejoining of the recombining DNA molecules. The XerC-XerD complex is essential to convert dimers of the bacterial chromosome into monomers to permit their segregation at cell division. It also contributes to the segregational stability of plasmids. In Xanthomonas campestris pv. campestris (strain ATCC 33913 / DSM 3586 / NCPPB 528 / LMG 568 / P 25), this protein is Tyrosine recombinase XerD.